The primary structure comprises 98 residues: NADH-ubiquinone oxidoreductase chain 4L (98 aa).

3 consecutive transmembrane segments (helical) span residues 1–21 (MPLI…GMLI), 29–49 (SLLC…LMAL), and 61–81 (VVLL…LVSI).

This sequence belongs to the complex I subunit 4L family. Core subunit of respiratory chain NADH dehydrogenase (Complex I) which is composed of 45 different subunits.

The protein resides in the mitochondrion inner membrane. It catalyses the reaction a ubiquinone + NADH + 5 H(+)(in) = a ubiquinol + NAD(+) + 4 H(+)(out). Core subunit of the mitochondrial membrane respiratory chain NADH dehydrogenase (Complex I) which catalyzes electron transfer from NADH through the respiratory chain, using ubiquinone as an electron acceptor. Part of the enzyme membrane arm which is embedded in the lipid bilayer and involved in proton translocation. In Hylobates lar (Lar gibbon), this protein is NADH-ubiquinone oxidoreductase chain 4L (MT-ND4L).